Consider the following 89-residue polypeptide: Small ribosomal subunit protein uS15 (89 aa).

This sequence belongs to the universal ribosomal protein uS15 family. Part of the 30S ribosomal subunit. Forms a bridge to the 50S subunit in the 70S ribosome, contacting the 23S rRNA.

One of the primary rRNA binding proteins, it binds directly to 16S rRNA where it helps nucleate assembly of the platform of the 30S subunit by binding and bridging several RNA helices of the 16S rRNA. Its function is as follows. Forms an intersubunit bridge (bridge B4) with the 23S rRNA of the 50S subunit in the ribosome. The polypeptide is Small ribosomal subunit protein uS15 (Hahella chejuensis (strain KCTC 2396)).